Here is a 175-residue protein sequence, read N- to C-terminus: Vesicle-associated membrane protein-associated protein SCS22 (175 aa).

Positions 1–125 (MRIVPEKLVF…DDIVFKKIKI (125 aa)) constitute an MSP domain. The Cytoplasmic segment spans residues 1–154 (MRIVPEKLVF…RAPSAGNGQS (154 aa)). Residues 133–152 (RKPSGNHDAESARAPSAGNG) are disordered. The helical; Anchor for type IV membrane protein transmembrane segment at 155 to 175 (LSSRALLIITVIALLVGWIYY) threads the bilayer.

It belongs to the VAMP-associated protein (VAP) (TC 9.B.17) family.

Its subcellular location is the membrane. In terms of biological role, targets proteins containing a FFAT motif to membranes. Involved in regulation of phospholipid metabolism. The polypeptide is Vesicle-associated membrane protein-associated protein SCS22 (SCS22) (Saccharomyces cerevisiae (strain ATCC 204508 / S288c) (Baker's yeast)).